A 311-amino-acid polypeptide reads, in one-letter code: Aspartate carbamoyltransferase catalytic subunit (311 aa).

Residues Arg55 and Thr56 each contribute to the carbamoyl phosphate site. Residue Lys85 coordinates L-aspartate. Positions 106, 135, and 138 each coordinate carbamoyl phosphate. The L-aspartate site is built by Arg168 and Arg230. Leu268 and Pro269 together coordinate carbamoyl phosphate.

This sequence belongs to the aspartate/ornithine carbamoyltransferase superfamily. ATCase family. As to quaternary structure, heterododecamer (2C3:3R2) of six catalytic PyrB chains organized as two trimers (C3), and six regulatory PyrI chains organized as three dimers (R2).

The enzyme catalyses carbamoyl phosphate + L-aspartate = N-carbamoyl-L-aspartate + phosphate + H(+). Its pathway is pyrimidine metabolism; UMP biosynthesis via de novo pathway; (S)-dihydroorotate from bicarbonate: step 2/3. Its function is as follows. Catalyzes the condensation of carbamoyl phosphate and aspartate to form carbamoyl aspartate and inorganic phosphate, the committed step in the de novo pyrimidine nucleotide biosynthesis pathway. The polypeptide is Aspartate carbamoyltransferase catalytic subunit (Escherichia coli (strain 55989 / EAEC)).